The primary structure comprises 236 residues: Leucyl/phenylalanyl-tRNA--protein transferase (236 aa).

Belongs to the L/F-transferase family.

It is found in the cytoplasm. It catalyses the reaction N-terminal L-lysyl-[protein] + L-leucyl-tRNA(Leu) = N-terminal L-leucyl-L-lysyl-[protein] + tRNA(Leu) + H(+). The enzyme catalyses N-terminal L-arginyl-[protein] + L-leucyl-tRNA(Leu) = N-terminal L-leucyl-L-arginyl-[protein] + tRNA(Leu) + H(+). The catalysed reaction is L-phenylalanyl-tRNA(Phe) + an N-terminal L-alpha-aminoacyl-[protein] = an N-terminal L-phenylalanyl-L-alpha-aminoacyl-[protein] + tRNA(Phe). In terms of biological role, functions in the N-end rule pathway of protein degradation where it conjugates Leu, Phe and, less efficiently, Met from aminoacyl-tRNAs to the N-termini of proteins containing an N-terminal arginine or lysine. The polypeptide is Leucyl/phenylalanyl-tRNA--protein transferase (Idiomarina loihiensis (strain ATCC BAA-735 / DSM 15497 / L2-TR)).